We begin with the raw amino-acid sequence, 514 residues long: Multifunctional alkaline phosphatase superfamily protein PehA (514 aa).

4 residues coordinate Mn(2+): D12, C57, D324, and H325. The active-site Nucleophile is C57. At C57 the chain carries 3-oxoalanine (Cys).

The protein belongs to the alkaline phosphatase superfamily. Homotetramer. Mn(2+) serves as cofactor. In terms of processing, the conversion to 3-oxoalanine (also known as C-formylglycine, FGly), of a serine or cysteine residue in prokaryotes and of a cysteine residue in eukaryotes, is critical for catalytic activity. Phosphate triester hydrolytic activity is retained with unmodified cysteine acting as a nucleophile.

With respect to regulation, anions including Cl(-) and CH3COO(-), and SO4(2-) salts stimulate activity 20-40% at 100 mM. Hydrolytic enzyme with a broad substrate specificity acting on phosphate diesters and phosphonate monoesters. Hydrolyzes phosphate mono- and triesters, sulfate monoesters and sulfonate monoesters. Hydrolyzes glyphosate monoesters. Does not hydrolyze DNA or cGMP. Hydrolyzes glyceryl glyphosate, but this substrate has a much lower affinity than the glyphosate monoesters. This Trinickia caryophylli (Paraburkholderia caryophylli) protein is Multifunctional alkaline phosphatase superfamily protein PehA.